We begin with the raw amino-acid sequence, 345 residues long: G-protein coupled receptor str-33 (345 aa).

Over Met-1–Thr-11 the chain is Extracellular. The helical transmembrane segment at Ile-12 to Ala-32 threads the bilayer. The Cytoplasmic portion of the chain corresponds to Arg-33 to Asn-37. A helical membrane pass occupies residues Ile-38–Cys-58. Residues Thr-59–Met-92 lie on the Extracellular side of the membrane. The N-linked (GlcNAc...) asparagine glycan is linked to Asn-71. A helical transmembrane segment spans residues Leu-93–Ile-113. The Cytoplasmic segment spans residues Tyr-114 to Lys-133. The chain crosses the membrane as a helical span at residues Leu-134–Phe-154. The Extracellular portion of the chain corresponds to Cys-155 to Ser-204. A helical membrane pass occupies residues Val-205–Cys-225. The Cytoplasmic segment spans residues Gly-226–Gln-258. Residues Ile-259–Phe-279 traverse the membrane as a helical segment. Residues Asn-280–Gly-288 are Extracellular-facing. The chain crosses the membrane as a helical span at residues Ile-289–Val-309. At Thr-310–Leu-345 the chain is on the cytoplasmic side.

The protein belongs to the nematode receptor-like protein str family. As to expression, detected in ALM and PLM mechanosensory neurons and head neurons.

The protein localises to the cell membrane. In terms of biological role, regulates egg-laying and locomotion. Likely to act upstream of goa-1 to suppress 5-hydroxytryptamine (5-HT) biosynthesis in hermaphrodite-specific neurons (HSNs) through inhibition of tph-1 transcription. In Caenorhabditis elegans, this protein is G-protein coupled receptor str-33.